Here is a 263-residue protein sequence, read N- to C-terminus: MTKNNESFTHRNFAAVLQKYKYDLNLGDIVAGTIFSFELNGVLVDIGTPVSAYLPIQEVSSNQELNNFNSLNINDTREFFLLDYNVESRQLILSIRRLEYIRAWKRIRQLLAEDSLLDVRIKGFNKGGMIVNLEGISGFVPNSHLNNFSKNTSSTNKFIKLKLLNVEEKSNNLILSHRRALIAQASSNLIVGNIIEGVINQITPYGLFIKAGNLKGLVHISEINVKQVERIPSQFKIGDTIKAVIIHVDKKQGRLSLSMKHLK.

3 consecutive S1 motif domains span residues 27 to 96, 114 to 178, and 192 to 260; these read GDIV…LSIR, DSLL…LSHR, and GNII…LSMK.

It belongs to the bacterial ribosomal protein bS1 family.

The protein resides in the plastid. Its subcellular location is the chloroplast. The chain is Small ribosomal subunit protein bS1c (rps1) from Porphyra purpurea (Red seaweed).